A 118-amino-acid polypeptide reads, in one-letter code: Large ribosomal subunit protein uL18 (118 aa).

This sequence belongs to the universal ribosomal protein uL18 family. Part of the 50S ribosomal subunit; part of the 5S rRNA/L5/L18/L25 subcomplex. Contacts the 5S and 23S rRNAs.

Functionally, this is one of the proteins that bind and probably mediate the attachment of the 5S RNA into the large ribosomal subunit, where it forms part of the central protuberance. This Rickettsia typhi (strain ATCC VR-144 / Wilmington) protein is Large ribosomal subunit protein uL18.